The primary structure comprises 715 residues: Targeting protein for Xklp2-B (715 aa).

Residues 36–167 form a disordered region; that stretch reads NAENIPPDQK…LTMPATPTVL (132 aa). Residues 47–56 show a composition bias toward polar residues; that stretch reads LSETSVNAEQ. Residues 85–103 are compositionally biased toward basic residues; the sequence is QTKRSARRMSKKHRQKILL. Residues 104–115 show a composition bias toward basic and acidic residues; it reads KMKETHLEKETA. Over residues 141 to 152 the composition is skewed to polar residues; that stretch reads QPTSSHHGTTSP. Serine 204 carries the post-translational modification Phosphoserine; by plk1. Disordered regions lie at residues 260-291 and 314-337; these read PPTS…EEAS and RSRQ…TNPK.

Belongs to the TPX2 family. In terms of assembly, associates with microtubules. Interacts with aurka and plk1. Interacts with kif15. Phosphorylated during mitosis. Hyperphosphorylated upon assembly of microtubules.

The protein resides in the nucleus. It localises to the cytoplasm. It is found in the cytoskeleton. Its subcellular location is the spindle. The protein localises to the spindle pole. Its function is as follows. Spindle assembly factor. Required for normal assembly of mitotic spindles. Mediates the binding kif15 and aurka to spindle microtubules. Required for targeting kif15 to microtubule minus ends. Activates aurka by promoting its autophosphorylation and protects the phosphorylated residue against dephosphorylation. The chain is Targeting protein for Xklp2-B (tpx2-b) from Xenopus laevis (African clawed frog).